A 517-amino-acid chain; its full sequence is ATP synthase subunit alpha 2 (517 aa).

173-180 (GDRQTGKT) is an ATP binding site.

The protein belongs to the ATPase alpha/beta chains family. In terms of assembly, F-type ATPases have 2 components, CF(1) - the catalytic core - and CF(0) - the membrane proton channel. CF(1) has five subunits: alpha(3), beta(3), gamma(1), delta(1), epsilon(1). CF(0) has three main subunits: a(1), b(2) and c(9-12). The alpha and beta chains form an alternating ring which encloses part of the gamma chain. CF(1) is attached to CF(0) by a central stalk formed by the gamma and epsilon chains, while a peripheral stalk is formed by the delta and b chains.

Its subcellular location is the cell inner membrane. The catalysed reaction is ATP + H2O + 4 H(+)(in) = ADP + phosphate + 5 H(+)(out). Produces ATP from ADP in the presence of a proton gradient across the membrane. The alpha chain is a regulatory subunit. The chain is ATP synthase subunit alpha 2 from Legionella pneumophila (strain Corby).